A 365-amino-acid polypeptide reads, in one-letter code: 4-hydroxy-tetrahydrodipicolinate synthase 1, chloroplastic (365 aa).

The transit peptide at 1–39 (MSALKNYGLISIDSALHFPRSNQLQSYKRRNAKWVSPIA) directs the protein to the chloroplast. Pyruvate is bound at residue T108. Residue Y194 is the Proton donor/acceptor of the active site. K222 acts as the Schiff-base intermediate with substrate in catalysis. I261 provides a ligand contact to pyruvate.

The protein belongs to the DapA family.

The protein resides in the plastid. It is found in the chloroplast. The enzyme catalyses L-aspartate 4-semialdehyde + pyruvate = (2S,4S)-4-hydroxy-2,3,4,5-tetrahydrodipicolinate + H2O + H(+). It participates in amino-acid biosynthesis; L-lysine biosynthesis via DAP pathway; (S)-tetrahydrodipicolinate from L-aspartate: step 3/4. Functionally, catalyzes the condensation of (S)-aspartate-beta-semialdehyde [(S)-ASA] and pyruvate to 4-hydroxy-tetrahydrodipicolinate (HTPA). This chain is 4-hydroxy-tetrahydrodipicolinate synthase 1, chloroplastic (DHDPS1), found in Arabidopsis thaliana (Mouse-ear cress).